Here is a 559-residue protein sequence, read N- to C-terminus: Poly(U)-binding-splicing factor PUF60 (559 aa).

The interval 1–516 (MATATIALQV…EDAEIIVKIF (516 aa)) is inhibits homodimerization. Residues Q14 and K43 each participate in a glycyl lysine isopeptide (Lys-Gly) (interchain with G-Cter in SUMO2) cross-link. T60 is modified (phosphothreonine). Residues 77-559 (QSIKSVLVKQ…ERFDNSDLSA (483 aa)) form an inhibits transcriptional repression, interaction with ERCC3 and apoptosis induction region. K80 participates in a covalent cross-link: Glycyl lysine isopeptide (Lys-Gly) (interchain with G-Cter in SUMO2). Position 112 is a phosphoserine (S112). RRM domains lie at 129 to 207 (CRVY…RPSN) and 226 to 304 (NRIY…KAVT). S244 is subject to Phosphoserine. The residue at position 251 (K251) is an N6-acetyllysine. T314 carries the phosphothreonine modification. A disordered region spans residues 416 to 437 (KKEKEEEELFPESERPEMLSEQ). K419 participates in a covalent cross-link: Glycyl lysine isopeptide (Lys-Gly) (interchain with G-Cter in SUMO2). Positions 427–437 (ESERPEMLSEQ) are enriched in basic and acidic residues. Position 454 is an N6-acetyllysine (K454). K458 participates in a covalent cross-link: Glycyl lysine isopeptide (Lys-Gly) (interchain with G-Cter in SUMO2). An RRM 3; atypical domain is found at 462 to 549 (TVMVLRNMVD…RKVVAEVYDQ (88 aa)).

Belongs to the RRM half pint family. As to quaternary structure, homodimer. Associates with the spliceosome. Found in a complex with RO60 and Y5 RNA. Found in a complex with FUBP1 and far upstream element (FUSE) DNA segment. Interacts directly with ERCC3. Interacts with CDK7 and GTF2H1. Interacts with SRSF11/P54. Does not interact with ERCC3 in xeroderma pigmentosum complementation group B (XPB) cells. Interacts with ARGLU1; interaction may be involved in ARGLU1-mediated modulation of alternative splicing. As to expression, isoform 2 is expressed in colonic epithelium and colorectal epithelium cancer (at protein level). Isoform 6 is expressed in colorectal epithelial cancer but below detection level in colonic epithelium. Expressed in heart, brain, placenta, lung, liver, skeletal muscle, kidney, pancreas, spleen, thymus, prostate, testis, ovary, small intestine, colon and peripheral blood leukocytes.

Its subcellular location is the nucleus. In terms of biological role, DNA- and RNA-binding protein, involved in several nuclear processes such as pre-mRNA splicing, apoptosis and transcription regulation. In association with FUBP1 regulates MYC transcription at the P2 promoter through the core-TFIIH basal transcription factor. Acts as a transcriptional repressor through the core-TFIIH basal transcription factor. Represses FUBP1-induced transcriptional activation but not basal transcription. Decreases ERCC3 helicase activity. Does not repress TFIIH-mediated transcription in xeroderma pigmentosum complementation group B (XPB) cells. Is also involved in pre-mRNA splicing. Promotes splicing of an intron with weak 3'-splice site and pyrimidine tract in a cooperative manner with U2AF2. Involved in apoptosis induction when overexpressed in HeLa cells. Isoform 6 failed to repress MYC transcription and inhibited FIR-induced apoptosis in colorectal cancer. Isoform 6 may contribute to tumor progression by enabling increased MYC expression and greater resistance to apoptosis in tumors than in normal cells. Modulates alternative splicing of several mRNAs. Binds to relaxed DNA of active promoter regions. Binds to the pyrimidine tract and 3'-splice site regions of pre-mRNA; binding is enhanced in presence of U2AF2. Binds to Y5 RNA in association with RO60. Binds to poly(U) RNA. This chain is Poly(U)-binding-splicing factor PUF60, found in Homo sapiens (Human).